The sequence spans 284 residues: RAD52 motif-containing protein 1 (284 aa).

Residues 1 to 92 (MAELVPFAVP…KQLFQKSPVK (92 aa)) are necessary for nuclear localization and for nucleolar accumulation in response to heat shock. In terms of domain architecture, RRM spans 15-98 (KTLLVWELSS…SPVKVRLGTR (84 aa)). A necessary for nuclear and nucleolar localization region spans residues 90-133 (PVKVRLGTRHKAVQHQALALNSSKCQELANYYFGFNGCSKRIIK).

Homodimer. As to expression, expressed in testis.

The protein localises to the nucleus. It is found in the cytoplasm. The protein resides in the nucleolus. Its subcellular location is the PML body. It localises to the cajal body. Its function is as follows. May confer resistance to the antitumor agent cisplatin. Binds to DNA and RNA. This Homo sapiens (Human) protein is RAD52 motif-containing protein 1 (RDM1).